The primary structure comprises 788 residues: MPFHIGSGCLPATISNRRIYRIAWSDTPPEMSSWEKMKEFFCSTHQTEALECIWTICHPPAGTTREDVINRFELLRTLAYAGWEESIHSGQHGENYFCILDEDSQEILSVTLDDAGNYTVNCQGYSETHRLTLDTAQGEEGTGHAEGASGTFRTSFLPATTAPQTPAEYDAVWSAWRRAAPAEESRGRAAVVQKMRACLNNGNAVLNVGESGLTTLPDCLPAHITTLVIPDNNLTSLPALPPELRTLEVSGNQLTSLPVLPPGLLELSIFSNPLTHLPALPSGLCKLWIFGNQLTSLPVLPPGLQELSVSDNQLASLPALPSELCKLWAYNNQLTSLPMLPSGLQELSVSDNQLASLPTLPSELYKLWAYNNRLTSLPALPSGLKELIVSGNRLTSLPVLPSELKELMVSGNRLTSLPMLPSGLLSLSVYRNQLTRLPESLIHLSSETTVNLEGNPLSERTLQALREITSAPGYSGPIIRFDMAGASAPRETRALHLAAADWLVPAREGEPAPADRWHMFGQEDNADAFSLFLDRLSETENFIKDAGFKAQISSWLAQLAEDEALRANTFAMATEATSSCEDRVTFFLHQMKNVQLVHNAEKGQYDNDLAALVATGREMFRLGKLEQIAREKVRTLALVDEIEVWLAYQNKLKKSLGLTSVTSEMRFFDVSGVTVTDLQDAELQVKAAEKSEFREWILQWGPLHRVLERKAPERVNALREKQISDYEETYRMLSDTELRPSGLVGNTDAERTIGARAMESAKKTFLDGLRPLVEEMLGSYLNVQWRRN.

Residues 1–481 (MPFHIGSGCL…PGYSGPIIRF (481 aa)) form an interaction with host membrane and with target proteins region. 12 LRR repeats span residues 223-242 (HITT…ALPP), 243-264 (ELRT…PPGL), 265-282 (LELS…ALPS), 283-302 (GLCK…VLPP), 303-324 (GLQE…PSEL), 325-342 (CKLW…MLPS), 343-364 (GLQE…PSEL), 365-382 (YKLW…ALPS), 383-404 (GLKE…PSEL), 405-422 (KELM…MLPS), 423-445 (GLLS…IHLS), and 446-466 (SETT…QALR). Residues 482 to 491 (DMAGASAPRE) are linker. Residues 492–788 (TRALHLAAAD…SYLNVQWRRN (297 aa)) form an E3 ubiquitin-protein ligase catalytic domain region. Positions 494–788 (ALHLAAADWL…SYLNVQWRRN (295 aa)) constitute an NEL domain. Catalysis depends on Cys-580, which acts as the Glycyl thioester intermediate.

This sequence belongs to the LRR-containing bacterial E3 ligase family. In terms of processing, ubiquitinated in the presence of host E1 ubiquitin-activating enzyme UBA1, E2 ubiquitin-conjugating enzyme UBE2D2 and ubiquitin.

It is found in the secreted. It localises to the host cytoplasm. Its subcellular location is the host apical cell membrane. The catalysed reaction is S-ubiquitinyl-[E2 ubiquitin-conjugating enzyme]-L-cysteine + [acceptor protein]-L-lysine = [E2 ubiquitin-conjugating enzyme]-L-cysteine + N(6)-ubiquitinyl-[acceptor protein]-L-lysine.. With respect to regulation, exists in an autoinhibited state in the absence of substrate protein, due to interactions of the leucine-rich repeat domain with the catalytic domain. Is activated upon binding to a substrate protein. Functionally, effector proteins function to alter host cell physiology and promote bacterial survival in host tissues. This protein is an E3 ubiquitin ligase that interferes with host's ubiquitination pathway. The chain is E3 ubiquitin-protein ligase SspH2 (sspH2) from Salmonella typhimurium (strain LT2 / SGSC1412 / ATCC 700720).